The sequence spans 968 residues: RNA polymerase-associated protein RapA (968 aa).

The region spanning 164 to 334 (DVGRRHAPRV…FARLRLLDPN (171 aa)) is the Helicase ATP-binding domain. Residue 177 to 184 (DEVGLGKT) participates in ATP binding. The DEAH box motif lies at 280–283 (DEAH). The Helicase C-terminal domain occupies 490–662 (RVEWLMGYLT…YLASPDQTEG (173 aa)).

This sequence belongs to the SNF2/RAD54 helicase family. RapA subfamily. As to quaternary structure, interacts with the RNAP. Has a higher affinity for the core RNAP than for the holoenzyme. Its ATPase activity is stimulated by binding to RNAP.

Functionally, transcription regulator that activates transcription by stimulating RNA polymerase (RNAP) recycling in case of stress conditions such as supercoiled DNA or high salt concentrations. Probably acts by releasing the RNAP, when it is trapped or immobilized on tightly supercoiled DNA. Does not activate transcription on linear DNA. Probably not involved in DNA repair. This Escherichia coli O9:H4 (strain HS) protein is RNA polymerase-associated protein RapA.